The primary structure comprises 546 residues: Probable protein kinase UbiB (546 aa).

Residues 123–501 (DFDETPLASA…SRRQGQARYL (379 aa)) enclose the Protein kinase domain. ATP is bound by residues 129–137 (LASASIAQV) and Lys-152. The Proton acceptor role is filled by Asp-287. Transmembrane regions (helical) follow at residues 498 to 517 (ARYL…FLLT) and 522 to 541 (IEWG…LGWL).

Belongs to the ABC1 family. UbiB subfamily.

Its subcellular location is the cell inner membrane. It functions in the pathway cofactor biosynthesis; ubiquinone biosynthesis [regulation]. Is probably a protein kinase regulator of UbiI activity which is involved in aerobic coenzyme Q (ubiquinone) biosynthesis. In Aeromonas hydrophila subsp. hydrophila (strain ATCC 7966 / DSM 30187 / BCRC 13018 / CCUG 14551 / JCM 1027 / KCTC 2358 / NCIMB 9240 / NCTC 8049), this protein is Probable protein kinase UbiB.